We begin with the raw amino-acid sequence, 244 residues long: Globin-like protein 9 (244 aa).

Residues 1–38 (MRRMAKYDRSYSMQDAHGPNGLARRGTQRGCSRSKSTR) form a disordered region. The region spanning 47–200 (SLTFSQKQAL…LIDELRGGFE (154 aa)) is the Globin domain. Heme-binding residues include histidine 111 and histidine 143.

Belongs to the globin family.

In Caenorhabditis briggsae, this protein is Globin-like protein 9.